Reading from the N-terminus, the 341-residue chain is Glyceraldehyde-3-phosphate dehydrogenase 3.1 (341 aa).

NAD(+) contacts are provided by residues 13–14 (RI), D35, and R85. Residues 157 to 159 (SCT), T188, 217 to 218 (TG), and R240 contribute to the D-glyceraldehyde 3-phosphate site. C158 functions as the Nucleophile in the catalytic mechanism. An NAD(+)-binding site is contributed by N322.

This sequence belongs to the glyceraldehyde-3-phosphate dehydrogenase family. In terms of assembly, homotetramer.

The protein localises to the cytoplasm. It carries out the reaction D-glyceraldehyde 3-phosphate + phosphate + NAD(+) = (2R)-3-phospho-glyceroyl phosphate + NADH + H(+). It participates in carbohydrate degradation; glycolysis; pyruvate from D-glyceraldehyde 3-phosphate: step 1/5. The polypeptide is Glyceraldehyde-3-phosphate dehydrogenase 3.1 (Caenorhabditis briggsae).